We begin with the raw amino-acid sequence, 84 residues long: Small ribosomal subunit protein uS17 (84 aa).

This sequence belongs to the universal ribosomal protein uS17 family. Part of the 30S ribosomal subunit.

Its function is as follows. One of the primary rRNA binding proteins, it binds specifically to the 5'-end of 16S ribosomal RNA. This chain is Small ribosomal subunit protein uS17, found in Shigella boydii serotype 18 (strain CDC 3083-94 / BS512).